The primary structure comprises 208 residues: Neuroendocrine protein 7B2 (208 aa).

The first 26 residues, 1-26 (MGMYSAIPLALPMVLLMVYGLTPSLG), serve as a signal peptide directing secretion. Cysteine 120 and cysteine 129 are joined by a disulfide. Phosphoserine is present on serine 204.

It belongs to the 7B2 family. As to quaternary structure, interacts with pcsk2 early in the secretory pathway. Dissociation occurs at later stages. Post-translationally, proteolytically cleaved in the Golgi by a furin-like convertase to generate bioactive peptides. In terms of processing, sulfated on tyrosine residues.

The protein resides in the secreted. Its function is as follows. Acts as a molecular chaperone for pcsk2, preventing its premature activation in the regulated secretory pathway. Binds to inactive pcsk2 in the endoplasmic reticulum and facilitates its transport from there to later compartments of the secretory pathway where it is proteolytically matured and activated. Also required for cleavage of pcsk2 but does not appear to be involved in its folding. This chain is Neuroendocrine protein 7B2 (scg5.L), found in Xenopus laevis (African clawed frog).